We begin with the raw amino-acid sequence, 105 residues long: Unclassified hydrophobin D (105 aa).

The signal sequence occupies residues 1–18 (MKFYIVLLALAAFAMAEA). Cystine bridges form between Cys-35–Cys-86, Cys-42–Cys-83, and Cys-43–Cys-49.

The protein localises to the secreted. It localises to the cell wall. Its function is as follows. Aerial growth, conidiation, and dispersal of filamentous fungi in the environment rely upon a capability of their secreting small amphipathic proteins called hydrophobins (HPBs) with low sequence identity. Class I can self-assemble into an outermost layer of rodlet bundles on aerial cell surfaces, conferring cellular hydrophobicity that supports fungal growth, development and dispersal; whereas Class II form highly ordered films at water-air interfaces through intermolecular interactions but contribute nothing to the rodlet structure. In P.expansum, hydrophobins contribute to germination, tolerance to cold stress and mycotoxins patulin and citrinin production. The polypeptide is Unclassified hydrophobin D (Penicillium expansum (Blue mold rot fungus)).